Consider the following 418-residue polypeptide: Probable endo-beta-1,4-glucanase celB (418 aa).

A signal peptide spans 1 to 18 (MVRTFAVTALALLPLVAA). N-linked (GlcNAc...) asparagine glycosylation is found at Asn46, Asn118, and Asn136. The Nucleophile role is filled by Glu215. Glu220 functions as the Proton donor in the catalytic mechanism. Asn234 and Asn291 each carry an N-linked (GlcNAc...) asparagine glycan.

This sequence belongs to the glycosyl hydrolase 7 (cellulase C) family.

It is found in the secreted. It carries out the reaction Endohydrolysis of (1-&gt;4)-beta-D-glucosidic linkages in cellulose, lichenin and cereal beta-D-glucans.. Its function is as follows. Has endoglucanase activity on substrates containing beta-1,4 glycosidic bonds, like in carboxymethylcellulose (CMC), hydroxyethylcellulose (HEC) and beta-glucan. Involved in the degradation of complex natural cellulosic substrates. The polypeptide is Probable endo-beta-1,4-glucanase celB (celB) (Aspergillus clavatus (strain ATCC 1007 / CBS 513.65 / DSM 816 / NCTC 3887 / NRRL 1 / QM 1276 / 107)).